The following is a 516-amino-acid chain: Bifunctional pantoate ligase/cytidylate kinase (516 aa).

Residues 1–279 (MVRKIFQTNA…CGSTRLIDHT (279 aa)) are pantoate--beta-alanine ligase. 29 to 36 (MGGLHPGH) contacts ATP. Histidine 36 acts as the Proton donor in catalysis. Glutamine 64 is a binding site for (R)-pantoate. Glutamine 64 contacts beta-alanine. 153-156 (GEKD) contributes to the ATP binding site. Glutamine 159 contributes to the (R)-pantoate binding site. Residue 190-193 (YSSR) coordinates ATP. The cytidylate kinase stretch occupies residues 280-516 (FLMHRKPIIA…PEEVWPTPNS (237 aa)).

The protein in the N-terminal section; belongs to the pantothenate synthetase family. This sequence in the C-terminal section; belongs to the cytidylate kinase family. Type 1 subfamily.

It is found in the cytoplasm. The enzyme catalyses (R)-pantoate + beta-alanine + ATP = (R)-pantothenate + AMP + diphosphate + H(+). It catalyses the reaction CMP + ATP = CDP + ADP. It carries out the reaction dCMP + ATP = dCDP + ADP. It functions in the pathway cofactor biosynthesis; (R)-pantothenate biosynthesis; (R)-pantothenate from (R)-pantoate and beta-alanine: step 1/1. In terms of biological role, catalyzes the condensation of pantoate with beta-alanine in an ATP-dependent reaction via a pantoyl-adenylate intermediate. Functionally, catalyzes the transfer of a phosphate group from ATP to either CMP or dCMP to form CDP or dCDP and ADP, respectively. The chain is Bifunctional pantoate ligase/cytidylate kinase from Prochlorococcus marinus (strain NATL2A).